Here is a 79-residue protein sequence, read N- to C-terminus: Acyl carrier protein (79 aa).

The region spanning 2-77 (ENIEQRVKKI…QAIDYVTAHL (76 aa)) is the Carrier domain. Serine 37 is subject to O-(pantetheine 4'-phosphoryl)serine.

The protein belongs to the acyl carrier protein (ACP) family. Post-translationally, 4'-phosphopantetheine is transferred from CoA to a specific serine of apo-ACP by AcpS. This modification is essential for activity because fatty acids are bound in thioester linkage to the sulfhydryl of the prosthetic group.

The protein resides in the cytoplasm. The protein operates within lipid metabolism; fatty acid biosynthesis. Its function is as follows. Carrier of the growing fatty acid chain in fatty acid biosynthesis. The protein is Acyl carrier protein of Laribacter hongkongensis (strain HLHK9).